The sequence spans 384 residues: GTPase Obg (384 aa).

The 159-residue stretch at 1–159 (MKFIDEAKIE…RSLQLELKVL (159 aa)) folds into the Obg domain. The segment at 20–46 (ATSFRREKFVPRGGPDGGDGGKGGSVW) is disordered. Gly residues predominate over residues 33–43 (GPDGGDGGKGG). The OBG-type G domain occupies 160 to 348 (ADVGLLGMPN…LVHQINQYLT (189 aa)). Residues 166–173 (GMPNAGKS), 191–195 (FTTLH), 213–216 (DIPG), 284–287 (NKLD), and 329–331 (SAL) each bind GTP. Mg(2+) is bound by residues serine 173 and threonine 193.

Belongs to the TRAFAC class OBG-HflX-like GTPase superfamily. OBG GTPase family. Monomer. The cofactor is Mg(2+).

It localises to the cytoplasm. Functionally, an essential GTPase which binds GTP, GDP and possibly (p)ppGpp with moderate affinity, with high nucleotide exchange rates and a fairly low GTP hydrolysis rate. Plays a role in control of the cell cycle, stress response, ribosome biogenesis and in those bacteria that undergo differentiation, in morphogenesis control. This is GTPase Obg from Neisseria meningitidis serogroup C (strain 053442).